A 1430-amino-acid chain; its full sequence is DNA-directed RNA polymerase subunit beta' (1430 aa).

The Zn(2+) site is built by Cys-71, Cys-73, Cys-86, and Cys-89. Mg(2+) contacts are provided by Asp-461, Asp-463, and Asp-465. Residues Cys-815, Cys-889, Cys-896, and Cys-899 each contribute to the Zn(2+) site. Positions 1388-1430 (RRQEAPAPAATPEQQAEEVFASLGQGEGEGPSPSDEASGPEVE) are disordered. Positions 1392–1405 (APAPAATPEQQAEE) are enriched in low complexity.

This sequence belongs to the RNA polymerase beta' chain family. The RNAP catalytic core consists of 2 alpha, 1 beta, 1 beta' and 1 omega subunit. When a sigma factor is associated with the core the holoenzyme is formed, which can initiate transcription. Requires Mg(2+) as cofactor. Zn(2+) is required as a cofactor.

The catalysed reaction is RNA(n) + a ribonucleoside 5'-triphosphate = RNA(n+1) + diphosphate. Its function is as follows. DNA-dependent RNA polymerase catalyzes the transcription of DNA into RNA using the four ribonucleoside triphosphates as substrates. This is DNA-directed RNA polymerase subunit beta' from Halorhodospira halophila (strain DSM 244 / SL1) (Ectothiorhodospira halophila (strain DSM 244 / SL1)).